A 244-amino-acid polypeptide reads, in one-letter code: Large ribosomal subunit protein uL3 (244 aa).

This sequence belongs to the universal ribosomal protein uL3 family. Part of the 50S ribosomal subunit. Forms a cluster with proteins L14 and L19.

One of the primary rRNA binding proteins, it binds directly near the 3'-end of the 23S rRNA, where it nucleates assembly of the 50S subunit. The sequence is that of Large ribosomal subunit protein uL3 from Aquifex pyrophilus.